The primary structure comprises 78 residues: MQKEVTKPIEIPANISLNNLQDLFPPHFGNEEADEDDEDGDKYGDDDGEFYGDNDGDNDGDNDGVNDGVGDGPPSTLL.

The tract at residues 20–78 (LQDLFPPHFGNEEADEDDEDGDKYGDDDGEFYGDNDGDNDGDNDGVNDGVGDGPPSTLL) is disordered. Acidic residues predominate over residues 31–64 (EEADEDDEDGDKYGDDDGEFYGDNDGDNDGDNDG).

This is an uncharacterized protein from Dictyostelium discoideum (Social amoeba).